A 635-amino-acid polypeptide reads, in one-letter code: 1-deoxy-D-xylulose-5-phosphate synthase (635 aa).

Residues His-72 and Gly-113 to Ala-115 each bind thiamine diphosphate. Asp-144 contacts Mg(2+). Residues Gly-145–Ala-146, Asn-174, Tyr-286, and Glu-369 each bind thiamine diphosphate. A Mg(2+)-binding site is contributed by Asn-174.

Belongs to the transketolase family. DXPS subfamily. As to quaternary structure, homodimer. Mg(2+) is required as a cofactor. Thiamine diphosphate serves as cofactor.

It catalyses the reaction D-glyceraldehyde 3-phosphate + pyruvate + H(+) = 1-deoxy-D-xylulose 5-phosphate + CO2. The protein operates within metabolic intermediate biosynthesis; 1-deoxy-D-xylulose 5-phosphate biosynthesis; 1-deoxy-D-xylulose 5-phosphate from D-glyceraldehyde 3-phosphate and pyruvate: step 1/1. In terms of biological role, catalyzes the acyloin condensation reaction between C atoms 2 and 3 of pyruvate and glyceraldehyde 3-phosphate to yield 1-deoxy-D-xylulose-5-phosphate (DXP). This is 1-deoxy-D-xylulose-5-phosphate synthase from Gloeothece citriformis (strain PCC 7424) (Cyanothece sp. (strain PCC 7424)).